The primary structure comprises 236 residues: Ribosome maturation protein SDO1 homolog (236 aa).

Belongs to the SDO1/SBDS family.

This is Ribosome maturation protein SDO1 homolog from Pyrococcus horikoshii (strain ATCC 700860 / DSM 12428 / JCM 9974 / NBRC 100139 / OT-3).